Reading from the N-terminus, the 85-residue chain is MTDNLNFTMKFDLDKDKEKKAREIIFTVYQSLEEKGYNPTNQFVGYILSGDPTYITSHNNARSLIRQIERDELLEELLKSYLNTK.

This sequence belongs to the UPF0297 family.

The protein is UPF0297 protein Clos_1665 of Alkaliphilus oremlandii (strain OhILAs) (Clostridium oremlandii (strain OhILAs)).